We begin with the raw amino-acid sequence, 41 residues long: Large ribosomal subunit protein bL36A (41 aa).

Belongs to the bacterial ribosomal protein bL36 family.

In Aeromonas salmonicida (strain A449), this protein is Large ribosomal subunit protein bL36A.